The sequence spans 432 residues: Adenylosuccinate synthetase 1 (432 aa).

GTP contacts are provided by residues 12–18 (GDEGKGR) and 40–42 (GHT). Aspartate 13 (proton acceptor) is an active-site residue. Positions 13 and 40 each coordinate Mg(2+). Residues 13–16 (DEGK), 38–41 (NAGH), threonine 128, arginine 142, glutamine 222, threonine 237, and arginine 301 each bind IMP. The Proton donor role is filled by histidine 41. 297-303 (TNTGRPR) contacts substrate. Residues arginine 303, 329–331 (KLD), and 411–413 (STG) contribute to the GTP site.

This sequence belongs to the adenylosuccinate synthetase family. As to quaternary structure, homodimer. It depends on Mg(2+) as a cofactor.

It is found in the cytoplasm. The catalysed reaction is IMP + L-aspartate + GTP = N(6)-(1,2-dicarboxyethyl)-AMP + GDP + phosphate + 2 H(+). The protein operates within purine metabolism; AMP biosynthesis via de novo pathway; AMP from IMP: step 1/2. Functionally, plays an important role in the de novo pathway of purine nucleotide biosynthesis. Catalyzes the first committed step in the biosynthesis of AMP from IMP. The chain is Adenylosuccinate synthetase 1 from Chromobacterium violaceum (strain ATCC 12472 / DSM 30191 / JCM 1249 / CCUG 213 / NBRC 12614 / NCIMB 9131 / NCTC 9757 / MK).